Reading from the N-terminus, the 334-residue chain is G-protein coupled receptor 12 (334 aa).

Residues 1–48 (MNEDPKVNLSGLPRDCIDAGAPENISAAVPSQGSVAESEPELVVNPWD) are Extracellular-facing. N-linked (GlcNAc...) asparagine glycans are attached at residues asparagine 8 and asparagine 24. The chain crosses the membrane as a helical span at residues 49-69 (IVLCSSGTLICCENAVVVLII). Topologically, residues 70-78 (FHSPSLRAP) are cytoplasmic. Residues 79 to 99 (MFLLIGSLALADLLAGLGLII) form a helical membrane-spanning segment. The Extracellular portion of the chain corresponds to 100–113 (NFVFAYLLQSEATK). A helical transmembrane segment spans residues 114–134 (LVTIGLIVASFSASVCSLLAI). Topologically, residues 135–158 (TVDRYLSLYYALTYHSERTVTFTY) are cytoplasmic. Residues 159 to 179 (VMLVMLWGTSICLGLLPVMGW) form a helical membrane-spanning segment. The Extracellular portion of the chain corresponds to 180 to 199 (NCLRDESTCSVVRPLTKNNA). A helical membrane pass occupies residues 200–220 (AILSISFLFMFALMLQLYIQI). Residues 221-252 (CKIVMRHAHQIALQHHFLATSHYVTTRKGVST) lie on the Cytoplasmic side of the membrane. Residues 253–273 (LALILGTFAACWMPFTLYSLI) traverse the membrane as a helical segment. Residues 274–282 (ADYTYPSIY) are Extracellular-facing. The chain crosses the membrane as a helical span at residues 283–303 (TYATLLPATYNSIINPVIYAF). The Cytoplasmic segment spans residues 304 to 334 (RNQEIQKALCLICCGCIPSSLSQRARSPSDV). Cysteine 317 carries S-palmitoyl cysteine lipidation. Serine 330 and serine 332 each carry phosphoserine.

Belongs to the G-protein coupled receptor 1 family. Expressed predominantly in the forebrain and a lesser extent in the hindbrain. Lower expression in the liver.

It is found in the cell membrane. In terms of biological role, receptor with constitutive G(s) signaling activity that stimulates cyclic AMP production. Promotes neurite outgrowth and blocks myelin inhibition in neurons. This is G-protein coupled receptor 12 (Gpr12) from Mus musculus (Mouse).